The chain runs to 742 residues: Photosystem I P700 chlorophyll a apoprotein A2 (742 aa).

The next 8 helical transmembrane spans lie at 46-69 (LFST…FHIA), 135-158 (LFQA…LHLQ), 175-199 (LNHH…HVAI), 273-291 (IAHH…GHMY), 336-359 (LHFQ…QHMG), 375-401 (SALY…IFFV), 423-445 (ALIS…IYVH), and 525-543 (FLVH…LILI). Cysteine 567 and cysteine 576 together coordinate [4Fe-4S] cluster. The next 2 membrane-spanning stretches (helical) occupy residues 583 to 604 (AMYL…YWHW) and 651 to 673 (LSVW…MFLI). 3 residues coordinate divinyl chlorophyll a: histidine 662, methionine 670, and tyrosine 678. Tryptophan 679 provides a ligand contact to phylloquinone. Residues 715 to 735 (LVGLAHFTIGNILTFGAFVIA) form a helical membrane-spanning segment.

The protein belongs to the PsaA/PsaB family. The PsaA/B heterodimer binds the P700 divinyl chlorophyll special pair and subsequent electron acceptors. PSI consists of a core antenna complex that captures photons, and an electron transfer chain that converts photonic excitation into a charge separation. The cyanobacterial PSI reaction center is composed of one copy each of PsaA,B,C,D,E,F,I,J,K,L,M and X, and forms trimeric complexes. It depends on PSI electron transfer chain: 5 divinyl chlorophyll a, 1 divinyl chlorophyll a', 2 phylloquinones and 3 4Fe-4S clusters. PSI core antenna: 90 divinyl chlorophyll a, 22 carotenoids, 3 phospholipids and 1 galactolipid. P700 is a divinyl chlorophyll a/divinyl chlorophyll a' dimer, A0 is one or more divinyl chlorophyll a, A1 is one or both phylloquinones and FX is a shared 4Fe-4S iron-sulfur center. as a cofactor.

The protein resides in the cellular thylakoid membrane. The catalysed reaction is reduced [plastocyanin] + hnu + oxidized [2Fe-2S]-[ferredoxin] = oxidized [plastocyanin] + reduced [2Fe-2S]-[ferredoxin]. Its function is as follows. PsaA and PsaB bind P700, the primary electron donor of photosystem I (PSI), as well as the electron acceptors A0, A1 and FX. PSI is a plastocyanin/cytochrome c6-ferredoxin oxidoreductase, converting photonic excitation into a charge separation, which transfers an electron from the donor P700 chlorophyll pair to the spectroscopically characterized acceptors A0, A1, FX, FA and FB in turn. Oxidized P700 is reduced on the lumenal side of the thylakoid membrane by plastocyanin or cytochrome c6. This is Photosystem I P700 chlorophyll a apoprotein A2 from Prochlorococcus marinus (strain MIT 9515).